A 310-amino-acid chain; its full sequence is Conjugation stage-specific protein (310 aa).

It belongs to the archaeal Rpo3/eukaryotic RPB3 RNA polymerase subunit family.

Its subcellular location is the nucleus. Functionally, may be a stage-specific RNA polymerase subunit. The polypeptide is Conjugation stage-specific protein (CNJC) (Tetrahymena thermophila).